Consider the following 329-residue polypeptide: Interferon regulatory factor 1 (329 aa).

The segment at residues 5-113 (RMRMRPWLEM…SAVRVYRMLP (109 aa)) is a DNA-binding region (IRF tryptophan pentad repeat). K78 carries the post-translational modification N6-acetyllysine. The interval 93–166 (EVKDQSRNKG…LPDDHSSYTT (74 aa)) is disordered. The span at 146-166 (DTFSDGLSSSTLPDDHSSYTT) shows a compositional bias: polar residues. Glycyl lysine isopeptide (Lys-Gly) (interchain with G-Cter in SUMO) cross-links involve residues K276 and K300.

Belongs to the IRF family. In terms of assembly, monomer. Homodimer. Interacts with EP300. Interacts with MYD88. Interacts with PIAS3. Interacts with SPOP. Post-translationally, phosphorylated by CK2 and this positively regulates its activity. In terms of processing, ubiquitinated in a SPOP-depedent manner. Sumoylation represses the transcriptional activity and displays enhanced resistance to protein degradation. Sumoylated by UBE2I/UBC9 and SUMO1. Inactivates the tumor suppressor activity. Elevated levels in tumor cells. Major site is Lys-276. Sumoylation is enhanced by PIAS3. Desumoylated by SENP1 in tumor cells and appears to compete with ubiquitination on C-terminal sites. Ubiquitinated. Appears to compete with sumoylation on C-terminal sites.

The protein resides in the nucleus. It is found in the cytoplasm. Its activity is regulated as follows. Activated by MYD88. Transcriptional regulator which displays a remarkable functional diversity in the regulation of cellular responses. Regulates transcription of IFN and IFN-inducible genes, host response to viral and bacterial infections, regulation of many genes expressed during hematopoiesis, inflammation, immune responses and cell proliferation and differentiation, regulation of the cell cycle and induction of growth arrest and programmed cell death following DNA damage. Stimulates both innate and acquired immune responses through the activation of specific target genes and can act as a transcriptional activator and repressor regulating target genes by binding to an interferon-stimulated response element (ISRE) in their promoters. Has an essentail role in IFNG-dependent immunity to mycobacteria. Binds to a consensus sequence in gene promoters. Its target genes for transcriptional activation activity are: genes involved in anti-viral response, such as IFN-alpha/beta, RIGI, TNFSF10/TRAIL, ZBP1, OAS1/2, PIAS1/GBP, EIF2AK2/PKR and RSAD2/viperin; antibacterial response, such as GBP2, GBP5, IRGB10 and NOS2/INOS; anti-proliferative response, such as p53/TP53, LOX and CDKN1A; apoptosis, such as BBC3/PUMA, CASP1, CASP7 and CASP8; immune response, such as IL7, IL12A/B and IL15, PTGS2/COX2 and CYBB; DNA damage responses and DNA repair, such as POLQ/POLH; MHC class I expression, such as TAP1, PSMB9/LMP2, PSME1/PA28A, PSME2/PA28B and B2M and MHC class II expression, such as CIITA; metabolic enzymes, such as ACOD1/IRG1. Represses genes involved in anti-proliferative response, such as BIRC5/survivin, CCNB1, CCNE1, CDK1, CDK2 and CDK4 and in immune response, such as FOXP3, IL4, ANXA2 and TLR4. Stimulates p53/TP53-dependent transcription through enhanced recruitment of EP300 leading to increased acetylation of p53/TP53. Plays an important role in immune response directly affecting NK maturation and activity, macrophage production of IL12, Th1 development and maturation of CD8+ T-cells. Also implicated in the differentiation and maturation of dendritic cells and in the suppression of regulatory T (Treg) cells development. Acts as a tumor suppressor and plays a role not only in antagonism of tumor cell growth but also in stimulating an immune response against tumor cells. This Mus musculus (Mouse) protein is Interferon regulatory factor 1 (Irf1).